We begin with the raw amino-acid sequence, 1477 residues long: Lysine-specific demethylase rbr-2 (1477 aa).

Positions 1 to 37 are disordered; the sequence is MRARRQENSISTPSAPSTSTSPRKKASIGNSRSKNHG. Low complexity predominate over residues 9-21; it reads SISTPSAPSTSTS. The region spanning 56–97 is the JmjN domain; that stretch reads APIYYPTEEEFSDPIEYVAKIRHEAEKFGVVKIVPPANFKPP. One can recognise an ARID domain in the interval 121-218; the sequence is VKEKHTFIDR…HIEPFNRNLK (98 aa). Positions 222–314 are disordered; it reads MKNDDESDDE…KAEGDDDDDE (93 aa). Residues 246–259 are compositionally biased toward basic and acidic residues; that stretch reads MRTEIEVPNDKTTE. Basic residues-rich tracts occupy residues 272-283 and 295-304; these read GRRRSKNKKASS and NSTRGRKNKK. A PHD-type 1 zinc finger spans residues 319-371; it reads QVFCVACNEGKDEDLLLLCDIDGCNNGRHTYCCDPVLDEVPEGEWRCPKCIES. Residues 468–634 enclose the JmjC domain; sequence QYASHAWNLN…KGRECVESYS (167 aa). Residues His-514, Asp-517, and His-602 each contribute to the Fe cation site. Residues 874-926 adopt a coiled-coil conformation; that stretch reads IIDKLEKWMEQVEMWRNRAKDAIYREQEYSKEEIEKIIEEGDEYDIKLEEIDE. The PHD-type 2 zinc finger occupies 1203–1257; it reads LEACSCLGFNKSDDSESTLTCIMCDSEFHVRCCEWSPFLEKLPEGCFLCVRCLRG. A disordered region spans residues 1375 to 1404; that stretch reads TAKRKRPSVSHKETSKKSRKRQSQASPSEY. The PHD-type 3 zinc finger occupies 1411-1466; sequence FKSCQARACLKPYGDSVNWVMCEAGCKNWFHVICLGFTLREINDMHEYRCSSCLDH.

The protein belongs to the JARID1 histone demethylase family. Requires Fe(2+) as cofactor.

It is found in the nucleus. It catalyses the reaction N(6),N(6),N(6)-trimethyl-L-lysyl(4)-[histone H3] + 3 2-oxoglutarate + 3 O2 = L-lysyl(4)-[histone H3] + 3 formaldehyde + 3 succinate + 3 CO2. Its function is as follows. Histone demethylase that specifically demethylates 'Lys-4' of histone H3, thereby playing a central role in histone code. Does not demethylate histone H3 'Lys-9', H3 'Lys-27', H3 'Lys-36', H3 'Lys-79' or H4 'Lys-20'. Demethylates trimethylated and dimethylated but not monomethylated H3 'Lys-4'. Required for normal longevity of the soma in a germline-dependent manner. Implicated in the epigenetic inheritance of lifespan over several generations. Involved in larval development and vulva formation. The chain is Lysine-specific demethylase rbr-2 (rbr-2) from Caenorhabditis elegans.